A 313-amino-acid polypeptide reads, in one-letter code: MEKIKVIFCGTPQIGADILTTLTEMENVEVVLVISQPDRPVGRKKELKPTPVKEIALKNNLKIIQPVKISEAYEEIAQIESDFIVTCAYGQFVPTKILDLPKIDSINVHGSLLPKYRGGAPIQYAIKNGDSKTGISIMKMVKKMDAGDYYIQESIDIEETDDTGIMFEKLAKLGQKMIKENLLKIYNNELPPIAQNEDEVTFSKNISTEEEKINWNDLSVNVWNHIRSLSPWPIAHTFKGEERYKIQKVQILNNNVEAKPGTIVNISENGIDIQTKDGQVQILLIQKPGKKMMEASSYKLNNLSDLKVGDCFE.

(6S)-5,6,7,8-tetrahydrofolate is bound at residue 111–114 (SLLP).

Belongs to the Fmt family.

The enzyme catalyses L-methionyl-tRNA(fMet) + (6R)-10-formyltetrahydrofolate = N-formyl-L-methionyl-tRNA(fMet) + (6S)-5,6,7,8-tetrahydrofolate + H(+). Attaches a formyl group to the free amino group of methionyl-tRNA(fMet). The formyl group appears to play a dual role in the initiator identity of N-formylmethionyl-tRNA by promoting its recognition by IF2 and preventing the misappropriation of this tRNA by the elongation apparatus. This is Methionyl-tRNA formyltransferase from Mesoplasma florum (strain ATCC 33453 / NBRC 100688 / NCTC 11704 / L1) (Acholeplasma florum).